Here is a 638-residue protein sequence, read N- to C-terminus: Chaperone protein HtpG (638 aa).

Residues 1–346 (MSQQETHGFQ…SNDLPLNVSR (346 aa)) form an a; substrate-binding region. A b region spans residues 347–563 (EILQDNKVTT…EGEMSTQMIK (217 aa)). The tract at residues 564–638 (LMQAAGQDVP…MNQMLLASVK (75 aa)) is c.

Belongs to the heat shock protein 90 family. Homodimer.

It localises to the cytoplasm. In terms of biological role, molecular chaperone. Has ATPase activity. This is Chaperone protein HtpG from Shewanella pealeana (strain ATCC 700345 / ANG-SQ1).